Consider the following 478-residue polypeptide: Poly(A) RNA polymerase cid11 (478 aa).

Residues Asp-106 and Asp-108 each coordinate Mg(2+). Residues 263–317 (SLGRLLIDFFYYYGFSFNYLDSVVSVRSGTVLNKQEKGWAMEVNNSLCVEEPFNT) form the PAP-associated domain. A disordered region spans residues 428 to 447 (QSYENKANRDSDFQGQTSLT).

This sequence belongs to the DNA polymerase type-B-like family. Mg(2+) serves as cofactor. The cofactor is Mn(2+).

The protein resides in the cytoplasm. It is found in the nucleus. The catalysed reaction is RNA(n) + ATP = RNA(n)-3'-adenine ribonucleotide + diphosphate. The sequence is that of Poly(A) RNA polymerase cid11 (cid11) from Schizosaccharomyces pombe (strain 972 / ATCC 24843) (Fission yeast).